The chain runs to 674 residues: DNA ligase (674 aa).

Residues 34 to 38 (DAEYD), 84 to 85 (SL), and Glu-116 each bind NAD(+). Lys-118 functions as the N6-AMP-lysine intermediate in the catalytic mechanism. NAD(+)-binding residues include Arg-139, Glu-174, Lys-291, and Lys-315. 4 residues coordinate Zn(2+): Cys-409, Cys-412, Cys-425, and Cys-430. Positions 586 to 674 (REGEALKGLT…TGKDPRALTA (89 aa)) constitute a BRCT domain.

It belongs to the NAD-dependent DNA ligase family. LigA subfamily. It depends on Mg(2+) as a cofactor. The cofactor is Mn(2+).

It catalyses the reaction NAD(+) + (deoxyribonucleotide)n-3'-hydroxyl + 5'-phospho-(deoxyribonucleotide)m = (deoxyribonucleotide)n+m + AMP + beta-nicotinamide D-nucleotide.. Its function is as follows. DNA ligase that catalyzes the formation of phosphodiester linkages between 5'-phosphoryl and 3'-hydroxyl groups in double-stranded DNA using NAD as a coenzyme and as the energy source for the reaction. It is essential for DNA replication and repair of damaged DNA. The chain is DNA ligase from Thermus sp. (strain AK16D).